The sequence spans 236 residues: Uridylate kinase (236 aa).

Residue 10 to 13 (KLSG) coordinates ATP. A UMP-binding site is contributed by Gly52. Gly53 and Arg57 together coordinate ATP. Residues Asp72 and 133–140 (TGNPFFTT) contribute to the UMP site. Residues Thr160, Tyr166, and Asp169 each contribute to the ATP site.

This sequence belongs to the UMP kinase family. Homohexamer.

It is found in the cytoplasm. The catalysed reaction is UMP + ATP = UDP + ADP. It functions in the pathway pyrimidine metabolism; CTP biosynthesis via de novo pathway; UDP from UMP (UMPK route): step 1/1. Its activity is regulated as follows. Inhibited by UTP. In terms of biological role, catalyzes the reversible phosphorylation of UMP to UDP. The polypeptide is Uridylate kinase (Phocaeicola vulgatus (strain ATCC 8482 / DSM 1447 / JCM 5826 / CCUG 4940 / NBRC 14291 / NCTC 11154) (Bacteroides vulgatus)).